We begin with the raw amino-acid sequence, 289 residues long: Glucanase inhibitor protein 2 (289 aa).

Positions 1–19 (MKVTATIAAASMAIAAASA) are cleaved as a signal peptide. Residues 29–257 (ILGGSIIPSG…ALKWVNPIIK (229 aa)) enclose the Peptidase S1 domain. Cysteines 56 and 72 form a disulfide. N89, N104, and N109 each carry an N-linked (GlcNAc...) asparagine glycan. 2 cysteine pairs are disulfide-bonded: C180–C192 and C202–C233.

It belongs to the peptidase S1 family.

The protein localises to the secreted. Its function is as follows. Secreted effector that suppresses host plant glucan elicitor-mediated defense responses. Targets host endoglucanases and inhibits the endoglucanase-mediated release of elicitor-active glucan oligosaccharides from P.sojae cell walls. The polypeptide is Glucanase inhibitor protein 2 (Phytophthora sojae (Soybean stem and root rot agent)).